Reading from the N-terminus, the 390-residue chain is Alanine racemase (390 aa).

The active-site Proton acceptor; specific for D-alanine is the K46. N6-(pyridoxal phosphate)lysine is present on K46. A substrate-binding site is contributed by R144. Residue Y275 is the Proton acceptor; specific for L-alanine of the active site. M323 provides a ligand contact to substrate.

The protein belongs to the alanine racemase family. Requires pyridoxal 5'-phosphate as cofactor.

The enzyme catalyses L-alanine = D-alanine. It functions in the pathway amino-acid biosynthesis; D-alanine biosynthesis; D-alanine from L-alanine: step 1/1. In terms of biological role, catalyzes the interconversion of L-alanine and D-alanine. May also act on other amino acids. In Mycolicibacterium vanbaalenii (strain DSM 7251 / JCM 13017 / BCRC 16820 / KCTC 9966 / NRRL B-24157 / PYR-1) (Mycobacterium vanbaalenii), this protein is Alanine racemase (alr).